We begin with the raw amino-acid sequence, 1542 residues long: Pleiotropic ABC efflux transporter of multiple drugs PDH1 (1542 aa).

Positions 1–14 are enriched in low complexity; sequence MNTPDDSSVSSVDS. Residues 1–61 are disordered; that stretch reads MNTPDDSSVS…APADGSAPLD (61 aa). Over 1-517 the chain is Cytoplasmic; that stretch reads MNTPDDSSVS…LIRNFWRIKN (517 aa). Over residues 24-33 the composition is skewed to basic and acidic residues; sequence NVEKRIRELA. Polar residues predominate over residues 35-47; that stretch reads SLTQQSLTSSNRS. An ABC transporter 1 domain is found at 153 to 409; that stretch reads VKLLNAVWRK…FQKMGYFCPK (257 aa). Helical transmembrane passes span 518–540, 552–574, 603–625, 634–652, 662–684, and 773–792; these read SASV…GSMF, FYFR…LLEI, VISE…YFLV, FFFY…SHLF, LQEA…GFAI, and GFGV…LILC. The Cytoplasmic segment spans residues 793-1220; sequence EFNEGAKQKG…LFQQYWRTPD (428 aa). Over residues 825 to 834 the composition is skewed to basic and acidic residues; the sequence is TKMHTDKNDI. The segment at 825-846 is disordered; the sequence is TKMHTDKNDIENNSESITSNAT. Over residues 835 to 846 the composition is skewed to polar residues; it reads ENNSESITSNAT. The region spanning 885 to 1128 is the ABC transporter 2 domain; that stretch reads FHWQNLCYDV…MIKYFEDHGA (244 aa). 921 to 928 serves as a coordination point for ATP; the sequence is GASGAGKT. The next 6 membrane-spanning stretches (helical) occupy residues 1221-1241, 1256-1276, 1296-1316, 1342-1362, 1370-1390, and 1495-1515; these read YLWS…FTFF, SIFM…PTFV, AFIL…GTLA, LFWL…LFVI, TAAH…GVMA, and GIFI…YWLA. Topologically, residues 1516 to 1542 are cytoplasmic; sequence RVPKTNGKIAKNGKTAKVNFIRRLIPF.

It belongs to the ABC transporter superfamily. ABCG family. PDR (TC 3.A.1.205) subfamily. In terms of processing, phosphorylated by PKA. Dephosphorylated on glucose depletion and independently rephosphorylated during glucose exposure or under stress.

The protein resides in the cell membrane. Pleiotropic ABC efflux transporter that confers resistance to structurally and functionally unrelated compounds including caspofungin or azoles such as fluconazole, itraconazole, posaconazole, voriconazole, and isavuconazole. Does not play a role in the azole resistance in mature biofilms. The sequence is that of Pleiotropic ABC efflux transporter of multiple drugs PDH1 from Candida glabrata (strain ATCC 2001 / BCRC 20586 / JCM 3761 / NBRC 0622 / NRRL Y-65 / CBS 138) (Yeast).